Here is a 414-residue protein sequence, read N- to C-terminus: COUP transcription factor 2 (414 aa).

The tract at residues 1–72 is disordered; that stretch reads MAMVVSTWRD…PGGPGSDKQQ (72 aa). Pro residues predominate over residues 27–37; it reads PPVPGPPPGAP. Residues 38 to 57 show a composition bias toward low complexity; the sequence is HTPQTPGQGGPASTPAQTAA. Residue threonine 51 is modified to Phosphothreonine. Residues 58–67 show a composition bias toward gly residues; the sequence is GGQGGPGGPG. Positions 76–151 form a DNA-binding region, nuclear receptor; it reads HIECVVCGDK…VGMRREAVQR (76 aa). 2 NR C4-type zinc fingers span residues 79–99 and 115–139; these read CVVC…CEGC and CRAN…LKKC. The interaction with ZFPM2 stretch occupies residues 117 to 414; it reads ANRNCPIDQH…SFNWPYMAIQ (298 aa). One can recognise an NR LBD domain in the interval 177–403; that stretch reads YLSGYISLLL…TLIRDMLLSG (227 aa). The tract at residues 337-414 is important for dimerization; it reads LQEKSQCALE…SFNWPYMAIQ (78 aa).

It belongs to the nuclear hormone receptor family. NR2 subfamily. As to quaternary structure, interacts with SQSTM1. Binds DNA as a dimer; homodimer or heterodimer with NR2F6. Interacts with NCOA1, NCOA2, NCOA3 and PPARGC1A. Interacts with ZFPM2. In terms of tissue distribution, ubiquitous. Expressed in the stromal cells of developing fetal ovaries.

Its subcellular location is the nucleus. Ligand-activated transcription factor. Activated by high concentrations of 9-cis-retinoic acid and all-trans-retinoic acid, but not by dexamethasone, cortisol or progesterone (in vitro). Regulation of the apolipoprotein A-I gene transcription. Binds to DNA site A. May be required to establish ovary identity during early gonad development. The chain is COUP transcription factor 2 (NR2F2) from Homo sapiens (Human).